The sequence spans 317 residues: tRNA dimethylallyltransferase (317 aa).

14–21 is a binding site for ATP; the sequence is GPTAVGKT. 16 to 21 serves as a coordination point for substrate; that stretch reads TAVGKT. An interaction with substrate tRNA region spans residues 39–42; sequence DSMQ.

It belongs to the IPP transferase family. As to quaternary structure, monomer. Requires Mg(2+) as cofactor.

The catalysed reaction is adenosine(37) in tRNA + dimethylallyl diphosphate = N(6)-dimethylallyladenosine(37) in tRNA + diphosphate. In terms of biological role, catalyzes the transfer of a dimethylallyl group onto the adenine at position 37 in tRNAs that read codons beginning with uridine, leading to the formation of N6-(dimethylallyl)adenosine (i(6)A). The chain is tRNA dimethylallyltransferase from Bacillus cereus (strain G9842).